The primary structure comprises 697 residues: Protein arginine N-methyltransferase 7 (697 aa).

SAM-dependent MTase PRMT-type domains are found at residues 14 to 357 (QNTW…YSLW) and 366 to 697 (EQPA…EETK).

It belongs to the class I-like SAM-binding methyltransferase superfamily. Protein arginine N-methyltransferase family. PRMT7 subfamily.

In terms of biological role, essential arginine methyltransferase that can both catalyze the formation of omega-N monomethylarginine (MMA) and symmetrical dimethylarginine (sDMA). Specifically mediates the symmetrical dimethylation of arginine residues in the small nuclear ribonucleoproteins SmD1 and SmD3. This Drosophila virilis (Fruit fly) protein is Protein arginine N-methyltransferase 7 (Art7).